The chain runs to 41 residues: Large ribosomal subunit protein bL36 (41 aa).

The protein belongs to the bacterial ribosomal protein bL36 family.

This is Large ribosomal subunit protein bL36 from Edwardsiella ictaluri (strain 93-146).